The following is a 349-amino-acid chain: Protein-glutamate methylesterase/protein-glutamine glutaminase (349 aa).

The Response regulatory domain maps to 5–122 (RVLSVDDSAL…REGMLAYSEM (118 aa)). Position 56 is a 4-aspartylphosphate (aspartate 56). In terms of domain architecture, CheB-type methylesterase spans 152–344 (LLSSEKLIAI…QQMLAKISAG (193 aa)). Residues serine 164, histidine 190, and aspartate 286 contribute to the active site.

Belongs to the CheB family. Phosphorylated by CheA. Phosphorylation of the N-terminal regulatory domain activates the methylesterase activity.

It localises to the cytoplasm. The catalysed reaction is [protein]-L-glutamate 5-O-methyl ester + H2O = L-glutamyl-[protein] + methanol + H(+). It catalyses the reaction L-glutaminyl-[protein] + H2O = L-glutamyl-[protein] + NH4(+). Its function is as follows. Involved in chemotaxis. Part of a chemotaxis signal transduction system that modulates chemotaxis in response to various stimuli. Catalyzes the demethylation of specific methylglutamate residues introduced into the chemoreceptors (methyl-accepting chemotaxis proteins or MCP) by CheR. Also mediates the irreversible deamidation of specific glutamine residues to glutamic acid. The chain is Protein-glutamate methylesterase/protein-glutamine glutaminase from Escherichia coli O157:H7.